Consider the following 101-residue polypeptide: Small ribosomal subunit protein uS14 (101 aa).

The protein belongs to the universal ribosomal protein uS14 family. As to quaternary structure, part of the 30S ribosomal subunit. Contacts proteins S3 and S10.

Its function is as follows. Binds 16S rRNA, required for the assembly of 30S particles and may also be responsible for determining the conformation of the 16S rRNA at the A site. The chain is Small ribosomal subunit protein uS14 from Janthinobacterium sp. (strain Marseille) (Minibacterium massiliensis).